The primary structure comprises 806 residues: Phenylalanine--tRNA ligase beta subunit (806 aa).

A tRNA-binding domain is found at 39 to 154 (SAGLKKIVVG…EAIAPGTDVY (116 aa)). The 76-residue stretch at 410–485 (PQPKVIQFDS…RLYGYDNLPS (76 aa)) folds into the B5 domain. The Mg(2+) site is built by Asp-463, Asp-469, Glu-472, and Glu-473. The region spanning 713–806 (PKFPEVTRDI…LVATFQAKVR (94 aa)) is the FDX-ACB domain.

Belongs to the phenylalanyl-tRNA synthetase beta subunit family. Type 1 subfamily. Tetramer of two alpha and two beta subunits. It depends on Mg(2+) as a cofactor.

It is found in the cytoplasm. It carries out the reaction tRNA(Phe) + L-phenylalanine + ATP = L-phenylalanyl-tRNA(Phe) + AMP + diphosphate + H(+). This chain is Phenylalanine--tRNA ligase beta subunit, found in Latilactobacillus sakei subsp. sakei (strain 23K) (Lactobacillus sakei subsp. sakei).